The sequence spans 201 residues: Troponin I (201 aa).

N-acetylalanine is present on Ala-1. Over residues 1 to 33 (ADKAKAAEEAKKKQDDIDRKKAEVRKRLEEQSL) the composition is skewed to basic and acidic residues. Residues 1 to 45 (ADKAKAAEEAKKKQDDIDRKKAEVRKRLEEQSLKKQKKGFMTPER) form a disordered region. The interval 108–117 (IESDKYDVEL) is troponin T-interaction. An actin-binding region spans residues 135-148 (DLRGKFIKPTLKKV). 2 positions are modified to N6,N6,N6-trimethyllysine: Lys-142 and Lys-146. Residues 182–201 (EDDKGATEGDGPAAEEVAAE) are disordered.

It belongs to the troponin I family.

Its function is as follows. Troponin I is the actomyosin ATPase inhibitory subunit present in the thin filament regulatory complex. This chain is Troponin I, found in Astacus leptodactylus (Turkish narrow-clawed crayfish).